Consider the following 355-residue polypeptide: Protein-glutamate methylesterase/protein-glutamine glutaminase 3 (355 aa).

The 118-residue stretch at 5–122 folds into the Response regulatory domain; the sequence is KVLIVDDSAV…KQFLEESRVR (118 aa). Aspartate 56 carries the post-translational modification 4-aspartylphosphate. Residues 165–355 form the CheB-type methylesterase domain; that stretch reads IQTTEKVVVV…IAREVLRLCG (191 aa). Active-site residues include serine 177, histidine 203, and aspartate 299.

Belongs to the CheB family. Phosphorylated by CheA. Phosphorylation of the N-terminal regulatory domain activates the methylesterase activity.

Its subcellular location is the cytoplasm. It catalyses the reaction [protein]-L-glutamate 5-O-methyl ester + H2O = L-glutamyl-[protein] + methanol + H(+). The enzyme catalyses L-glutaminyl-[protein] + H2O = L-glutamyl-[protein] + NH4(+). In terms of biological role, involved in chemotaxis. Part of a chemotaxis signal transduction system that modulates chemotaxis in response to various stimuli. Catalyzes the demethylation of specific methylglutamate residues introduced into the chemoreceptors (methyl-accepting chemotaxis proteins or MCP) by CheR. Also mediates the irreversible deamidation of specific glutamine residues to glutamic acid. The protein is Protein-glutamate methylesterase/protein-glutamine glutaminase 3 of Geobacter metallireducens (strain ATCC 53774 / DSM 7210 / GS-15).